We begin with the raw amino-acid sequence, 919 residues long: Phosphoenolpyruvate carboxylase (919 aa).

Active-site residues include His-138 and Lys-579.

It belongs to the PEPCase type 1 family. It depends on Mg(2+) as a cofactor.

It catalyses the reaction oxaloacetate + phosphate = phosphoenolpyruvate + hydrogencarbonate. Functionally, forms oxaloacetate, a four-carbon dicarboxylic acid source for the tricarboxylic acid cycle. The protein is Phosphoenolpyruvate carboxylase of Corynebacterium glutamicum (Brevibacterium saccharolyticum).